A 462-amino-acid polypeptide reads, in one-letter code: Fumarate hydratase class II (462 aa).

Substrate is bound by residues 97-99 (SGT), 127-130 (HPND), 137-139 (SSN), and threonine 185. Residue histidine 186 is the Proton donor/acceptor of the active site. The active site involves serine 316. Residues serine 317 and 322–324 (KVN) contribute to the substrate site.

It belongs to the class-II fumarase/aspartase family. Fumarase subfamily. In terms of assembly, homotetramer.

The protein resides in the cytoplasm. It carries out the reaction (S)-malate = fumarate + H2O. The protein operates within carbohydrate metabolism; tricarboxylic acid cycle; (S)-malate from fumarate: step 1/1. Its function is as follows. Involved in the TCA cycle. Catalyzes the stereospecific interconversion of fumarate to L-malate. The protein is Fumarate hydratase class II of Halalkalibacterium halodurans (strain ATCC BAA-125 / DSM 18197 / FERM 7344 / JCM 9153 / C-125) (Bacillus halodurans).